The following is a 718-amino-acid chain: Ribosomal RNA large subunit methyltransferase K/L (718 aa).

Positions 44-155 constitute a THUMP domain; it reads DAYKVCIYSY…KQFVNVFLCL (112 aa).

The protein belongs to the methyltransferase superfamily. RlmKL family.

The protein localises to the cytoplasm. The enzyme catalyses guanosine(2445) in 23S rRNA + S-adenosyl-L-methionine = N(2)-methylguanosine(2445) in 23S rRNA + S-adenosyl-L-homocysteine + H(+). It carries out the reaction guanosine(2069) in 23S rRNA + S-adenosyl-L-methionine = N(2)-methylguanosine(2069) in 23S rRNA + S-adenosyl-L-homocysteine + H(+). In terms of biological role, specifically methylates the guanine in position 2445 (m2G2445) and the guanine in position 2069 (m7G2069) of 23S rRNA. In Francisella tularensis subsp. novicida (strain U112), this protein is Ribosomal RNA large subunit methyltransferase K/L.